The following is a 251-amino-acid chain: tRNA-cytidine(32) 2-sulfurtransferase 1 (251 aa).

Residues 33–38 carry the PP-loop motif motif; the sequence is SGGKDS. Residues C108, C111, and C199 each coordinate [4Fe-4S] cluster.

The protein belongs to the TtcA family. As to quaternary structure, homodimer. It depends on Mg(2+) as a cofactor. [4Fe-4S] cluster is required as a cofactor.

The protein resides in the cytoplasm. The enzyme catalyses cytidine(32) in tRNA + S-sulfanyl-L-cysteinyl-[cysteine desulfurase] + AH2 + ATP = 2-thiocytidine(32) in tRNA + L-cysteinyl-[cysteine desulfurase] + A + AMP + diphosphate + H(+). It functions in the pathway tRNA modification. Catalyzes the ATP-dependent 2-thiolation of cytidine in position 32 of tRNA, to form 2-thiocytidine (s(2)C32). The sulfur atoms are provided by the cysteine/cysteine desulfurase (IscS) system. The polypeptide is tRNA-cytidine(32) 2-sulfurtransferase 1 (Francisella tularensis subsp. holarctica (strain FTNF002-00 / FTA)).